The chain runs to 718 residues: uncharacterized protein (718 aa).

The next 6 helical transmembrane spans lie at 9-29 (VISTIPVFIAVNIAAVGIWFF), 60-80 (NVFFTLIAFSISSFIVQLHIG), 83-103 (IQYIVLMTVLTFIFTMIGAVG), 136-156 (VMILCGTLLYSVVTLIVYLFF), 391-411 (IVVFLCCAIVEFFQFNLGYWI), and 506-526 (LLDTLLGAAISWFAVSYLWPD).

Belongs to the YccS/YhfK family.

It is found in the cell membrane. This is an uncharacterized protein from Haemophilus influenzae (strain ATCC 51907 / DSM 11121 / KW20 / Rd).